Reading from the N-terminus, the 262-residue chain is Putative carbamate hydrolase RutD (262 aa).

It belongs to the AB hydrolase superfamily. Hydrolase RutD family.

It carries out the reaction carbamate + 2 H(+) = NH4(+) + CO2. Its function is as follows. Involved in pyrimidine catabolism. May facilitate the hydrolysis of carbamate, a reaction that can also occur spontaneously. In Rhizobium rhizogenes (strain K84 / ATCC BAA-868) (Agrobacterium radiobacter), this protein is Putative carbamate hydrolase RutD.